A 216-amino-acid polypeptide reads, in one-letter code: Peptide methionine sulfoxide reductase MsrA (216 aa).

Cysteine 58 is a catalytic residue.

Belongs to the MsrA Met sulfoxide reductase family.

It catalyses the reaction L-methionyl-[protein] + [thioredoxin]-disulfide + H2O = L-methionyl-(S)-S-oxide-[protein] + [thioredoxin]-dithiol. It carries out the reaction [thioredoxin]-disulfide + L-methionine + H2O = L-methionine (S)-S-oxide + [thioredoxin]-dithiol. Its function is as follows. Has an important function as a repair enzyme for proteins that have been inactivated by oxidation. Catalyzes the reversible oxidation-reduction of methionine sulfoxide in proteins to methionine. In Azotobacter vinelandii (strain DJ / ATCC BAA-1303), this protein is Peptide methionine sulfoxide reductase MsrA.